Reading from the N-terminus, the 227-residue chain is Cytochrome c oxidase subunit 2 (227 aa).

Over 1 to 14 (MAYPLQLGLQDASS) the chain is Mitochondrial intermembrane. A helical membrane pass occupies residues 15–45 (PIMEELMNFHDHTLMIVFLISSLVLYLISLM). The Mitochondrial matrix portion of the chain corresponds to 46 to 59 (LTTKLIHTSTMDAQ). Residues 60–87 (EVETVWTILPAIILILIALPSLRILYMM) form a helical membrane-spanning segment. At 88–227 (DEINNPVLTV…LFENWSLSLT (140 aa)) the chain is on the mitochondrial intermembrane side. Cu cation contacts are provided by H161, C196, E198, C200, H204, and M207. E198 serves as a coordination point for Mg(2+).

The protein belongs to the cytochrome c oxidase subunit 2 family. Component of the cytochrome c oxidase (complex IV, CIV), a multisubunit enzyme composed of 14 subunits. The complex is composed of a catalytic core of 3 subunits MT-CO1, MT-CO2 and MT-CO3, encoded in the mitochondrial DNA, and 11 supernumerary subunits COX4I, COX5A, COX5B, COX6A, COX6B, COX6C, COX7A, COX7B, COX7C, COX8 and NDUFA4, which are encoded in the nuclear genome. The complex exists as a monomer or a dimer and forms supercomplexes (SCs) in the inner mitochondrial membrane with NADH-ubiquinone oxidoreductase (complex I, CI) and ubiquinol-cytochrome c oxidoreductase (cytochrome b-c1 complex, complex III, CIII), resulting in different assemblies (supercomplex SCI(1)III(2)IV(1) and megacomplex MCI(2)III(2)IV(2)). Found in a complex with TMEM177, COA6, COX18, COX20, SCO1 and SCO2. Interacts with TMEM177 in a COX20-dependent manner. Interacts with COX20. Interacts with COX16. The cofactor is Cu cation.

It is found in the mitochondrion inner membrane. It catalyses the reaction 4 Fe(II)-[cytochrome c] + O2 + 8 H(+)(in) = 4 Fe(III)-[cytochrome c] + 2 H2O + 4 H(+)(out). Component of the cytochrome c oxidase, the last enzyme in the mitochondrial electron transport chain which drives oxidative phosphorylation. The respiratory chain contains 3 multisubunit complexes succinate dehydrogenase (complex II, CII), ubiquinol-cytochrome c oxidoreductase (cytochrome b-c1 complex, complex III, CIII) and cytochrome c oxidase (complex IV, CIV), that cooperate to transfer electrons derived from NADH and succinate to molecular oxygen, creating an electrochemical gradient over the inner membrane that drives transmembrane transport and the ATP synthase. Cytochrome c oxidase is the component of the respiratory chain that catalyzes the reduction of oxygen to water. Electrons originating from reduced cytochrome c in the intermembrane space (IMS) are transferred via the dinuclear copper A center (CU(A)) of subunit 2 and heme A of subunit 1 to the active site in subunit 1, a binuclear center (BNC) formed by heme A3 and copper B (CU(B)). The BNC reduces molecular oxygen to 2 water molecules using 4 electrons from cytochrome c in the IMS and 4 protons from the mitochondrial matrix. The protein is Cytochrome c oxidase subunit 2 (MT-CO2) of Taterillus emini (Emin's gerbil).